The following is a 423-amino-acid chain: MQLRASVLLSFLGLASVGHAGNVENNHNVCTVRANGGHQDDVPNIMAAFKECGNGGTIIFPEDQSYWIATRLHPTLKDVAIEWRGKWTFSDNLTYWRNNSYPIAFQNHHAGFIISGDNITINGYGTGGIDGNGNTWYTAEKGDTQPGRPMPFVFWNVSEVIVDSFYVKDPPLWSVNIMNGTNMRFNNIYCNATAVDAPWGDNWVQNTDGFDTMDATNIQLTNFVYQGGDDCIAIKPRSYNIDIQNVTCRGGNGIAIGSLGQYLEDSSVANIRVDKVNIIRYNEDMHNSAYLKTWVGALVPQSSYESAGVPRGDGWGSIRNVLFSNFNVQGASAGPSISQDSGDNGSYAGTSKMSISNVAFVNFTGWVDTEKSVVSTVSCSEVHPCYNIDYDNVVLYPGKNATTAGTGSCKYTADGGVHGLSGC.

The first 20 residues, 1 to 20 (MQLRASVLLSFLGLASVGHA), serve as a signal peptide directing secretion. 6 N-linked (GlcNAc...) asparagine glycosylation sites follow: Asn92, Asn98, Asn118, Asn156, Asn179, and Asn191. PbH1 repeat units lie at residues 215 to 236 (ATNI…AIKP) and 238 to 258 (SYNI…AIGS). The Proton donor role is filled by Asp229. Cys231 and Cys248 are joined by a disulfide. N-linked (GlcNAc...) asparagine glycosylation is found at Asn245, Asn344, and Asn362. A disulfide bond links Cys379 and Cys385. Asn400 carries an N-linked (GlcNAc...) asparagine glycan.

It belongs to the glycosyl hydrolase 28 family.

The protein localises to the secreted. It carries out the reaction [(1-&gt;4)-alpha-D-galacturonosyl](n) + H2O = alpha-D-galacturonate + [(1-&gt;4)-alpha-D-galacturonosyl](n-1). Functionally, specific in hydrolyzing the terminal glycosidic bond of polygalacturonic acid and oligogalacturonates. This is Putative galacturan 1,4-alpha-galacturonidase C (rgxC) from Aspergillus niger (strain ATCC MYA-4892 / CBS 513.88 / FGSC A1513).